The following is a 232-amino-acid chain: 2-C-methyl-D-erythritol 4-phosphate cytidylyltransferase (232 aa).

It belongs to the IspD/TarI cytidylyltransferase family. IspD subfamily.

It carries out the reaction 2-C-methyl-D-erythritol 4-phosphate + CTP + H(+) = 4-CDP-2-C-methyl-D-erythritol + diphosphate. Its pathway is isoprenoid biosynthesis; isopentenyl diphosphate biosynthesis via DXP pathway; isopentenyl diphosphate from 1-deoxy-D-xylulose 5-phosphate: step 2/6. Its function is as follows. Catalyzes the formation of 4-diphosphocytidyl-2-C-methyl-D-erythritol from CTP and 2-C-methyl-D-erythritol 4-phosphate (MEP). The sequence is that of 2-C-methyl-D-erythritol 4-phosphate cytidylyltransferase from Geobacter metallireducens (strain ATCC 53774 / DSM 7210 / GS-15).